We begin with the raw amino-acid sequence, 1217 residues long: Disease resistance protein RPS4 (1217 aa).

In terms of domain architecture, TIR spans 14–175; sequence PQHQVFINFR…EIVKAVKTAL (162 aa). The active site involves Glu-88. The NB-ARC domain maps to 211–472; the sequence is EQRLKDLEEK…FRSQDKDYVE (262 aa). 11 LRR repeats span residues 260 to 285, 436 to 459, 614 to 636, 637 to 659, 682 to 706, 708 to 728, 729 to 749, 750 to 774, 796 to 818, 819 to 842, and 861 to 887; these read HALI…LLGE, PNIV…AFLD, LKEV…DFNP, INLV…DKDT, AEKL…MKKM, MLAF…EMNL, ISLK…PLIS, DNIE…KLQR, LKAL…EIDI, SFLN…SVQY, and LSQL…NLQC. The tract at residues 1162 to 1195 is disordered; that stretch reads TEGVDGRVKKKKKTRMDNGRPKKKQRSGRDDNQT. The short motif at 1170–1177 is the Nuclear localization signal element; the sequence is KKKKKTRM.

In terms of assembly, interacts with EDS1.

It is found in the nucleus. It carries out the reaction NAD(+) + H2O = ADP-D-ribose + nicotinamide + H(+). Functionally, disease resistance (R) protein that specifically recognizes the AvrRps4 type III effector avirulence protein from Pseudomonas syringae. Resistance proteins guard the plant against pathogens that contain an appropriate avirulence protein via an indirect interaction with this avirulence protein. That triggers a defense system including the hypersensitive response, which restricts the pathogen growth. The combined presence of both regular and alternative RPS4 transcripts with truncated open reading frames (ORFs) is necessary for function. RPS4 function is regulated at multiple levels, including gene expression, alternative splicing, and protein stability. Acts as a disease resistance protein involved in resistance to fungal and bacterial pathogens, including R.solanacearum, P.syringae pv. tomato and C.higginsianum. In presence of RRS1, elicites an EDS1-dependent hypersensitive response. This Arabidopsis thaliana (Mouse-ear cress) protein is Disease resistance protein RPS4.